Consider the following 697-residue polypeptide: MAVMNGGRATKRARRSNRISADLYDFSTFPTAEINGESTTLPPFRDGVRTFLATHARVTFPPSTLFSSLMTWQIMLRPGDSTDGSDLSSKLVSLDVVEEDVTRSSRSVYCEHCCVVGWSSHPVCRKRYRFIIRSGGDTKACTRCGNTQNLSEGSNCKWCSMALDIENWVYSQLEDNTHLLHGVIHSNGYAHLLCLNGREGGSGFLTGRAIMDFWDRLCSSLAVRKASVMDVSRKYGMDYRLLHGITRGCSWYSEWGYEFKSGSYALTKEAYQSAVDTLSAIPLSEFLFQGRKPRTQLHSIISFYQSLSCSELVTVKDLFSFLLQMIRENSSKPASKSSVLCAWSKSDVERVQQTMVKILKASGRPQANWVTRWALKRSICKSASPQLIDYCLKHFGGVLVDDGSRVVSSRCNPGSNDFEYRLESVNNVHRLSNQDVNNASVEHVKQDLRYLYETLLHPQTMAEFRSRATREKMIDAATKILDCKHFIKDYLSSTVNPVAINLWCCVELSDELKESPAPPPERLVLPLNATVSDLKIEAAKAFQEVYAMFKRFEVEELLGYGSIDDSITLKFLVGTNGVIRIKGRCSKHGLLRYRMERGVDNWKVDCKCGTKDDDGERMLACDGCGVWHHTRCIGINNADALPSKFLCFRCIELYSKKPKQSKKERGSSQVPKAGFVCRGESAAMGSGSNLSVTLRVG.

A PHD-type zinc finger spans residues 603-653; sequence KVDCKCGTKDDDGERMLACDGCGVWHHTRCIGINNADALPSKFLCFRCIEL.

It localises to the nucleus. The protein is PHD finger protein At1g33420 of Arabidopsis thaliana (Mouse-ear cress).